A 467-amino-acid polypeptide reads, in one-letter code: 3-isopropylmalate dehydratase large subunit (467 aa).

The [4Fe-4S] cluster site is built by C348, C409, and C412. The interval N423 to S448 is disordered.

It belongs to the aconitase/IPM isomerase family. LeuC type 1 subfamily. In terms of assembly, heterodimer of LeuC and LeuD. It depends on [4Fe-4S] cluster as a cofactor.

It catalyses the reaction (2R,3S)-3-isopropylmalate = (2S)-2-isopropylmalate. It functions in the pathway amino-acid biosynthesis; L-leucine biosynthesis; L-leucine from 3-methyl-2-oxobutanoate: step 2/4. In terms of biological role, catalyzes the isomerization between 2-isopropylmalate and 3-isopropylmalate, via the formation of 2-isopropylmaleate. The protein is 3-isopropylmalate dehydratase large subunit of Bifidobacterium longum (strain DJO10A).